The primary structure comprises 312 residues: uncharacterized protein (312 aa).

It localises to the mitochondrion. This is an uncharacterized protein from Schizosaccharomyces pombe (strain 972 / ATCC 24843) (Fission yeast).